The following is a 123-amino-acid chain: Large ribosomal subunit protein bL12 (123 aa).

The protein belongs to the bacterial ribosomal protein bL12 family. Homodimer. Part of the ribosomal stalk of the 50S ribosomal subunit. Forms a multimeric L10(L12)X complex, where L10 forms an elongated spine to which 2 to 4 L12 dimers bind in a sequential fashion. Binds GTP-bound translation factors.

In terms of biological role, forms part of the ribosomal stalk which helps the ribosome interact with GTP-bound translation factors. Is thus essential for accurate translation. The chain is Large ribosomal subunit protein bL12 from Desulfotalea psychrophila (strain LSv54 / DSM 12343).